The sequence spans 353 residues: Photosystem II protein D1 (353 aa).

T2 is subject to N-acetylthreonine. Phosphothreonine is present on T2. Transmembrane regions (helical) follow at residues 29-46 (YIGW…TATS), 118-133 (HFLL…EWEL), and 142-156 (WIAV…AATA). Residue H118 coordinates chlorophyll a. A pheophytin a-binding site is contributed by Y126. Positions 170 and 189 each coordinate [CaMn4O5] cluster. Residues 197 to 218 (FHMLGVAGVFGGSLFSAMHGSL) traverse the membrane as a helical segment. H198 provides a ligand contact to chlorophyll a. A quinone is bound by residues H215 and 264-265 (SF). A Fe cation-binding site is contributed by H215. Residue H272 participates in Fe cation binding. A helical membrane pass occupies residues 274–288 (FLAAWPVVGIWFTAL). Positions 332, 333, 342, and 344 each coordinate [CaMn4O5] cluster. The propeptide occupies 345–353 (SIEAPLVNG).

The protein belongs to the reaction center PufL/M/PsbA/D family. PSII is composed of 1 copy each of membrane proteins PsbA, PsbB, PsbC, PsbD, PsbE, PsbF, PsbH, PsbI, PsbJ, PsbK, PsbL, PsbM, PsbT, PsbX, PsbY, PsbZ, Psb30/Ycf12, at least 3 peripheral proteins of the oxygen-evolving complex and a large number of cofactors. It forms dimeric complexes. The D1/D2 heterodimer binds P680, chlorophylls that are the primary electron donor of PSII, and subsequent electron acceptors. It shares a non-heme iron and each subunit binds pheophytin, quinone, additional chlorophylls, carotenoids and lipids. D1 provides most of the ligands for the Mn4-Ca-O5 cluster of the oxygen-evolving complex (OEC). There is also a Cl(-1) ion associated with D1 and D2, which is required for oxygen evolution. The PSII complex binds additional chlorophylls, carotenoids and specific lipids. serves as cofactor. Tyr-161 forms a radical intermediate that is referred to as redox-active TyrZ, YZ or Y-Z. In terms of processing, C-terminally processed by CTPA; processing is essential to allow assembly of the oxygen-evolving complex and thus photosynthetic growth.

The protein localises to the plastid. It is found in the chloroplast thylakoid membrane. The catalysed reaction is 2 a plastoquinone + 4 hnu + 2 H2O = 2 a plastoquinol + O2. Its function is as follows. Photosystem II (PSII) is a light-driven water:plastoquinone oxidoreductase that uses light energy to abstract electrons from H(2)O, generating O(2) and a proton gradient subsequently used for ATP formation. It consists of a core antenna complex that captures photons, and an electron transfer chain that converts photonic excitation into a charge separation. The D1/D2 (PsbA/PsbD) reaction center heterodimer binds P680, the primary electron donor of PSII as well as several subsequent electron acceptors. The chain is Photosystem II protein D1 from Psilotum nudum (Whisk fern).